We begin with the raw amino-acid sequence, 251 residues long: 3-deoxy-manno-octulosonate cytidylyltransferase (251 aa).

It belongs to the KdsB family.

Its subcellular location is the cytoplasm. The enzyme catalyses 3-deoxy-alpha-D-manno-oct-2-ulosonate + CTP = CMP-3-deoxy-beta-D-manno-octulosonate + diphosphate. It participates in nucleotide-sugar biosynthesis; CMP-3-deoxy-D-manno-octulosonate biosynthesis; CMP-3-deoxy-D-manno-octulosonate from 3-deoxy-D-manno-octulosonate and CTP: step 1/1. Its pathway is bacterial outer membrane biogenesis; lipopolysaccharide biosynthesis. Its function is as follows. Activates KDO (a required 8-carbon sugar) for incorporation into bacterial lipopolysaccharide in Gram-negative bacteria. The sequence is that of 3-deoxy-manno-octulosonate cytidylyltransferase from Vibrio vulnificus (strain YJ016).